The following is a 345-amino-acid chain: UPF0324 membrane protein CTC_01844 (345 aa).

Helical transmembrane passes span 7-24 (YSVG…SGFI), 28-50 (IPYR…NPIV), 70-87 (LAII…VLEV), 91-113 (SLIV…GKLF), 120-142 (SGLI…SPVI), 152-174 (AISA…GKYF), 181-203 (YGLW…YAFS), 209-231 (FSVI…FSYI), 261-283 (IFPW…IIPN), and 316-338 (SGFA…SFLV).

Belongs to the UPF0324 family.

The protein localises to the cell membrane. The chain is UPF0324 membrane protein CTC_01844 from Clostridium tetani (strain Massachusetts / E88).